Reading from the N-terminus, the 185-residue chain is Elongation factor P (185 aa).

This sequence belongs to the elongation factor P family.

Its subcellular location is the cytoplasm. Its pathway is protein biosynthesis; polypeptide chain elongation. In terms of biological role, involved in peptide bond synthesis. Stimulates efficient translation and peptide-bond synthesis on native or reconstituted 70S ribosomes in vitro. Probably functions indirectly by altering the affinity of the ribosome for aminoacyl-tRNA, thus increasing their reactivity as acceptors for peptidyl transferase. The protein is Elongation factor P of Cyanothece sp. (strain PCC 7425 / ATCC 29141).